The following is a 360-amino-acid chain: D-alanine--D-alanine ligase (360 aa).

Positions 134–343 (KILAQRVGVP…YTELITRLIQ (210 aa)) constitute an ATP-grasp domain. 169–224 (AEKLGHDMFVKPSNQGSSVGVNHVTNAEEYAAALEEAFKYDDKVLVEETVPGTEVE) serves as a coordination point for ATP. Mg(2+)-binding residues include aspartate 297, glutamate 310, and asparagine 312.

It belongs to the D-alanine--D-alanine ligase family. It depends on Mg(2+) as a cofactor. Requires Mn(2+) as cofactor.

It localises to the cytoplasm. It carries out the reaction 2 D-alanine + ATP = D-alanyl-D-alanine + ADP + phosphate + H(+). Its pathway is cell wall biogenesis; peptidoglycan biosynthesis. Cell wall formation. This Lactobacillus acidophilus (strain ATCC 700396 / NCK56 / N2 / NCFM) protein is D-alanine--D-alanine ligase.